A 176-amino-acid chain; its full sequence is DNA-directed RNA polymerase II subunit 7 (176 aa).

Belongs to the eukaryotic RPB7/RPC8 RNA polymerase subunit family. In terms of assembly, component of the RNA polymerase II complex consisting of at least 12 subunits. Interacts with NRPB4.

Its subcellular location is the nucleus. Functionally, DNA-dependent RNA polymerase catalyzes the transcription of DNA into RNA using the four ribonucleoside triphosphates as substrates. Component of RNA polymerase II which synthesizes mRNA precursors and many functional non-coding RNAs. Pol II is the central component of the basal RNA polymerase II transcription machinery. It is composed of mobile elements that move relative to each other. NRPB7 is part of a subcomplex with NRPB4 that binds to a pocket formed by NRPB1, NRPB2 and NRPB6 at the base of the clamp element. The NRBP4-NRPB7 subcomplex seems to lock the clamp via NRPB7 in the closed conformation thus preventing double-stranded DNA to enter the active site cleft. The NRPB4-NRPB7 subcomplex binds single-stranded DNA and RNA. This Arabidopsis thaliana (Mouse-ear cress) protein is DNA-directed RNA polymerase II subunit 7 (NRPB7).